A 141-amino-acid polypeptide reads, in one-letter code: Nucleoside diphosphate kinase (141 aa).

Positions 11, 59, 87, 93, 104, and 114 each coordinate ATP. The active-site Pros-phosphohistidine intermediate is the H117.

Belongs to the NDK family. As to quaternary structure, homotetramer. Requires Mg(2+) as cofactor.

Its subcellular location is the cytoplasm. The enzyme catalyses a 2'-deoxyribonucleoside 5'-diphosphate + ATP = a 2'-deoxyribonucleoside 5'-triphosphate + ADP. The catalysed reaction is a ribonucleoside 5'-diphosphate + ATP = a ribonucleoside 5'-triphosphate + ADP. Its function is as follows. Major role in the synthesis of nucleoside triphosphates other than ATP. The ATP gamma phosphate is transferred to the NDP beta phosphate via a ping-pong mechanism, using a phosphorylated active-site intermediate. The chain is Nucleoside diphosphate kinase from Verminephrobacter eiseniae (strain EF01-2).